The primary structure comprises 303 residues: uncharacterized protein (303 aa).

This is an uncharacterized protein from Archaeoglobus fulgidus (strain ATCC 49558 / DSM 4304 / JCM 9628 / NBRC 100126 / VC-16).